A 176-amino-acid polypeptide reads, in one-letter code: Shikimate kinase (176 aa).

12–17 (GSGKST) serves as a coordination point for ATP. Position 16 (serine 16) interacts with Mg(2+). Substrate-binding residues include aspartate 34, arginine 58, and glycine 80. Arginine 117 lines the ATP pocket. Arginine 136 provides a ligand contact to substrate. Arginine 153 contacts ATP.

This sequence belongs to the shikimate kinase family. Monomer. The cofactor is Mg(2+).

The protein localises to the cytoplasm. It carries out the reaction shikimate + ATP = 3-phosphoshikimate + ADP + H(+). Its pathway is metabolic intermediate biosynthesis; chorismate biosynthesis; chorismate from D-erythrose 4-phosphate and phosphoenolpyruvate: step 5/7. Functionally, catalyzes the specific phosphorylation of the 3-hydroxyl group of shikimic acid using ATP as a cosubstrate. The polypeptide is Shikimate kinase (Mycobacterium bovis (strain ATCC BAA-935 / AF2122/97)).